The sequence spans 330 residues: Agamous-like MADS-box protein AGL75 (330 aa).

The 43-residue stretch at 19–61 folds into the MADS-box domain; it reads TSLSNRLETIFKKASELCTLCDIEACVIYYGPDGELKTWPKEK.

In terms of assembly, interacts with MEE14/CBP1.

The protein localises to the nucleus. In terms of biological role, probable transcription factor that may function in the maintenance of the proper function of the central cell in pollen tube attraction. The chain is Agamous-like MADS-box protein AGL75 from Arabidopsis thaliana (Mouse-ear cress).